The following is a 275-amino-acid chain: Replication protein A 32 kDa subunit (275 aa).

The disordered stretch occupies residues 23–47 (MQSPGGFGSPAPTQGEKKSRSRSQQ). The segment at residues 76 to 150 (VTIVGIVRHA…KSVVAFKIAP (75 aa)) is a DNA-binding region (OB).

It belongs to the replication factor A protein 2 family. Component of the replication protein A complex (RPA/RP-A), a heterotrimeric complex composed of RPA1, RPA2 and RPA3. Differentially phosphorylated throughout the cell cycle, becoming phosphorylated at the G1-S transition and dephosphorylated in late mitosis. Phosphorylation increases upon replication fork stalling.

The protein resides in the nucleus. It is found in the PML body. Functionally, as part of the heterotrimeric replication protein A complex (RPA/RP-A), binds and stabilizes single-stranded DNA intermediates, that form during DNA replication or upon DNA stress. It prevents their reannealing and in parallel, recruits and activates different proteins and complexes involved in DNA metabolism. Thereby, it plays an essential role both in DNA replication and the cellular response to DNA damage. This Xenopus tropicalis (Western clawed frog) protein is Replication protein A 32 kDa subunit (rpa2).